The following is a 429-amino-acid chain: Glucose-1-phosphate adenylyltransferase (429 aa).

Residues Gly162, 177–178 (EK), and Ser209 contribute to the alpha-D-glucose 1-phosphate site.

It belongs to the bacterial/plant glucose-1-phosphate adenylyltransferase family. In terms of assembly, homotetramer.

It carries out the reaction alpha-D-glucose 1-phosphate + ATP + H(+) = ADP-alpha-D-glucose + diphosphate. Its pathway is glycan biosynthesis; glycogen biosynthesis. Its function is as follows. Involved in the biosynthesis of ADP-glucose, a building block required for the elongation reactions to produce glycogen. Catalyzes the reaction between ATP and alpha-D-glucose 1-phosphate (G1P) to produce pyrophosphate and ADP-Glc. In Gloeothece citriformis (strain PCC 7424) (Cyanothece sp. (strain PCC 7424)), this protein is Glucose-1-phosphate adenylyltransferase.